Here is a 517-residue protein sequence, read N- to C-terminus: Zinc finger protein 215 (517 aa).

In terms of domain architecture, SCAN box spans 48–126 (RQKFRHFQYL…KDMVTLIEDV (79 aa)). The 74-residue stretch at 164-237 (VTFKDVVVEF…EKEIPRKTIF (74 aa)) folds into the KRAB domain. 4 consecutive C2H2-type zinc fingers follow at residues 379 to 401 (YECY…QIIH), 407 to 429 (YKCS…QKLH), 462 to 484 (YQCV…QMIH), and 490 to 512 (FKCK…QKLH).

The protein belongs to the krueppel C2H2-type zinc-finger protein family.

The protein localises to the nucleus. Its function is as follows. May be involved in transcriptional regulation. This Homo sapiens (Human) protein is Zinc finger protein 215 (ZNF215).